Consider the following 143-residue polypeptide: Crossover junction endodeoxyribonuclease Hjc (143 aa).

Position 12 (Glu12) interacts with Mg(2+). Ser32 is an active-site residue. 2 residues coordinate Mg(2+): Asp42 and Glu55.

This sequence belongs to the Holliday junction resolvase Hjc family. Homodimer. It depends on Mg(2+) as a cofactor.

It carries out the reaction Endonucleolytic cleavage at a junction such as a reciprocal single-stranded crossover between two homologous DNA duplexes (Holliday junction).. In terms of biological role, a structure-specific endonuclease that resolves Holliday junction (HJ) intermediates during genetic recombination. Cleaves 4-way DNA junctions introducing paired nicks in opposing strands, leaving a 5'-terminal phosphate and a 3'-terminal hydroxyl group that are subsequently ligated to produce recombinant products. Hjc, Hjm (Hel308) and PINA coordinate HJ migration and cleavage of replication forks in a coordinated way. This Saccharolobus islandicus (strain REY15A) (Sulfolobus islandicus) protein is Crossover junction endodeoxyribonuclease Hjc.